The sequence spans 598 residues: NADH-quinone oxidoreductase subunit C/D (598 aa).

The tract at residues methionine 1–glutamate 189 is NADH dehydrogenase I subunit C. Positions aspartate 213–arginine 598 are NADH dehydrogenase I subunit D.

In the N-terminal section; belongs to the complex I 30 kDa subunit family. This sequence in the C-terminal section; belongs to the complex I 49 kDa subunit family. NDH-1 is composed of 13 different subunits. Subunits NuoB, CD, E, F, and G constitute the peripheral sector of the complex.

The protein localises to the cell inner membrane. The enzyme catalyses a quinone + NADH + 5 H(+)(in) = a quinol + NAD(+) + 4 H(+)(out). NDH-1 shuttles electrons from NADH, via FMN and iron-sulfur (Fe-S) centers, to quinones in the respiratory chain. The immediate electron acceptor for the enzyme in this species is believed to be ubiquinone. Couples the redox reaction to proton translocation (for every two electrons transferred, four hydrogen ions are translocated across the cytoplasmic membrane), and thus conserves the redox energy in a proton gradient. The protein is NADH-quinone oxidoreductase subunit C/D of Yersinia pestis bv. Antiqua (strain Angola).